We begin with the raw amino-acid sequence, 257 residues long: Aspartate/glutamate leucyltransferase (257 aa).

The protein belongs to the R-transferase family. Bpt subfamily.

Its subcellular location is the cytoplasm. It catalyses the reaction N-terminal L-glutamyl-[protein] + L-leucyl-tRNA(Leu) = N-terminal L-leucyl-L-glutamyl-[protein] + tRNA(Leu) + H(+). The catalysed reaction is N-terminal L-aspartyl-[protein] + L-leucyl-tRNA(Leu) = N-terminal L-leucyl-L-aspartyl-[protein] + tRNA(Leu) + H(+). Functions in the N-end rule pathway of protein degradation where it conjugates Leu from its aminoacyl-tRNA to the N-termini of proteins containing an N-terminal aspartate or glutamate. The protein is Aspartate/glutamate leucyltransferase of Rhodopseudomonas palustris (strain BisB5).